The primary structure comprises 132 residues: Protein FAM174C (132 aa).

Positions 1–26 (MGPRVLQPPLLLLLLALLLAALPCGA) are cleaved as a signal peptide. The segment at 34–66 (PAQVTLSPPPAVTNGSQPGAPHNSTHTRPPGAS) is disordered. Polar residues predominate over residues 46-60 (TNGSQPGAPHNSTHT). N-linked (GlcNAc...) asparagine glycosylation occurs at N47. A helical membrane pass occupies residues 73 to 93 (SFYVILGFCGLTALYFLIRAF). Residue T113 is modified to Phosphothreonine. The segment at 113–132 (TEMASLDSDEETVFESRNLR) is disordered. 2 positions are modified to phosphoserine: S117 and S120.

Belongs to the FAM174 family.

It is found in the membrane. This chain is Protein FAM174C, found in Homo sapiens (Human).